Consider the following 155-residue polypeptide: Regulatory protein RecX (155 aa).

This sequence belongs to the RecX family.

It is found in the cytoplasm. Modulates RecA activity. The sequence is that of Regulatory protein RecX from Pseudomonas fluorescens (strain SBW25).